Reading from the N-terminus, the 820-residue chain is LPS-assembly protein LptD (820 aa).

The segment at 1–27 is disordered; it reads MDLSSLPDPLRPTHSRLPARRRDRAEP. Basic residues predominate over residues 13–22; the sequence is THSRLPARRR.

This sequence belongs to the LptD family. In terms of assembly, component of the lipopolysaccharide transport and assembly complex. Interacts with LptE and LptA.

Together with LptE, is involved in the assembly of lipopolysaccharide (LPS) at the surface of the outer membrane. This is LPS-assembly protein LptD from Paracidovorax citrulli (strain AAC00-1) (Acidovorax citrulli).